A 229-amino-acid chain; its full sequence is Leucyl/phenylalanyl-tRNA--protein transferase (229 aa).

It belongs to the L/F-transferase family.

It localises to the cytoplasm. The enzyme catalyses N-terminal L-lysyl-[protein] + L-leucyl-tRNA(Leu) = N-terminal L-leucyl-L-lysyl-[protein] + tRNA(Leu) + H(+). The catalysed reaction is N-terminal L-arginyl-[protein] + L-leucyl-tRNA(Leu) = N-terminal L-leucyl-L-arginyl-[protein] + tRNA(Leu) + H(+). It catalyses the reaction L-phenylalanyl-tRNA(Phe) + an N-terminal L-alpha-aminoacyl-[protein] = an N-terminal L-phenylalanyl-L-alpha-aminoacyl-[protein] + tRNA(Phe). Its function is as follows. Functions in the N-end rule pathway of protein degradation where it conjugates Leu, Phe and, less efficiently, Met from aminoacyl-tRNAs to the N-termini of proteins containing an N-terminal arginine or lysine. The chain is Leucyl/phenylalanyl-tRNA--protein transferase from Pseudomonas syringae pv. tomato (strain ATCC BAA-871 / DC3000).